A 226-amino-acid polypeptide reads, in one-letter code: MQESTPVITIDGPSGAGKGTVARIVADQLGWHLLDSGAIYRVLAVAIQHHQLSLDDEEPLIPMAAHLDVQFEINSQGEAKVILEGENVTEIIRTEEVGGLASKVAAFPRVREALLRRQRAFSVSPGLIADGRDMGTVVFPKAPVKIFLTASAEERADRRFNQLKEKGIDVNIGRLLDDIRQRDERDQNRKVAPLIPAEGALTIDSTDISITEVVNKILMFANGKLT.

Glycine 12–threonine 20 contacts ATP.

The protein belongs to the cytidylate kinase family. Type 1 subfamily.

It is found in the cytoplasm. The enzyme catalyses CMP + ATP = CDP + ADP. The catalysed reaction is dCMP + ATP = dCDP + ADP. The chain is Cytidylate kinase from Colwellia psychrerythraea (strain 34H / ATCC BAA-681) (Vibrio psychroerythus).